A 178-amino-acid polypeptide reads, in one-letter code: CASP-like protein 5A1 (178 aa).

Over residues 1-11 the composition is skewed to low complexity; sequence MFASRPAVHPV. The interval 1 to 25 is disordered; that stretch reads MFASRPAVHPVEAPPPPDPAEQPRG. The Cytoplasmic portion of the chain corresponds to 1–37; the sequence is MFASRPAVHPVEAPPPPDPAEQPRGVLMKDLPGMPGT. A helical membrane pass occupies residues 38 to 58; sequence AGGLGLRLAQFAFAAVALAVM. Residues 59–69 lie on the Extracellular side of the membrane; the sequence is ASTNDFPSVTS. A helical membrane pass occupies residues 70 to 90; it reads FCFLVAAAILQCLWSFSLAIV. The Cytoplasmic portion of the chain corresponds to 91–105; it reads DIYALLVKRCLRNRR. A helical membrane pass occupies residues 106–126; sequence AVCLFAIGDGITAALTFSAAC. Residues 127–152 lie on the Extracellular side of the membrane; that stretch reads ASSGITVLIDNDLDLCSENHCASFES. The helical transmembrane segment at 153–173 threads the bilayer; the sequence is ATAMAFLSWFALSPSFLLNFW. At 174–178 the chain is on the cytoplasmic side; it reads SMASG.

This sequence belongs to the Casparian strip membrane proteins (CASP) family. Homodimer and heterodimers.

It localises to the cell membrane. The chain is CASP-like protein 5A1 from Oryza sativa subsp. japonica (Rice).